The primary structure comprises 553 residues: Protein TIC 55, chloroplastic (553 aa).

The N-terminal 60 residues, 1-60 (MALALASANSFLLPTKTHFALHVSPPPSKKTLLCTNPSSNFSFNKALSSRRRKQAWCVAA), are a transit peptide targeting the chloroplast. Topologically, residues 61–492 (AADVKDATLL…GCSSAIKAFQ (432 aa)) are stromal. In terms of domain architecture, Rieske spans 103–208 (WYPLYLTKNV…VRDSQGVLWV (106 aa)). [2Fe-2S] cluster-binding residues include cysteine 144, histidine 146, cysteine 163, and histidine 166. Fe cation contacts are provided by histidine 257 and histidine 262. Residues 493–513 (IWKNVLSGVVVALAALAILVS) traverse the membrane as a helical segment. Over 514 to 518 (GRQWK) the chain is Chloroplast intermembrane. The chain crosses the membrane as a helical span at residues 519-539 (VLLLASASLCSVGVYACSTAI). The Stromal segment spans residues 540 to 553 (AMNTTNFIRVHRRL).

Part of the Tic complex. Interacts with TIC62 and TIC110. Requires [2Fe-2S] cluster as cofactor.

It is found in the plastid. The protein resides in the chloroplast inner membrane. In terms of biological role, involved in protein precursor import into chloroplasts. Part of the redox regulon consisting of TIC32, TIC 55 and TIC62. The protein is Protein TIC 55, chloroplastic (TIC55) of Pisum sativum (Garden pea).